We begin with the raw amino-acid sequence, 351 residues long: Dual-specificity RNA methyltransferase RlmN (351 aa).

The Proton acceptor role is filled by E90. Positions 96-330 (EKDHYTACLS…ATLRKSKGSD (235 aa)) constitute a Radical SAM core domain. C103 and C335 are joined by a disulfide. The [4Fe-4S] cluster site is built by C110, C114, and C117. Residues 162-163 (GE), S194, 216-218 (SLH), and N292 contribute to the S-adenosyl-L-methionine site. The S-methylcysteine intermediate role is filled by C335.

The protein belongs to the radical SAM superfamily. RlmN family. It depends on [4Fe-4S] cluster as a cofactor.

It is found in the cytoplasm. It catalyses the reaction adenosine(2503) in 23S rRNA + 2 reduced [2Fe-2S]-[ferredoxin] + 2 S-adenosyl-L-methionine = 2-methyladenosine(2503) in 23S rRNA + 5'-deoxyadenosine + L-methionine + 2 oxidized [2Fe-2S]-[ferredoxin] + S-adenosyl-L-homocysteine. The enzyme catalyses adenosine(37) in tRNA + 2 reduced [2Fe-2S]-[ferredoxin] + 2 S-adenosyl-L-methionine = 2-methyladenosine(37) in tRNA + 5'-deoxyadenosine + L-methionine + 2 oxidized [2Fe-2S]-[ferredoxin] + S-adenosyl-L-homocysteine. Functionally, specifically methylates position 2 of adenine 2503 in 23S rRNA and position 2 of adenine 37 in tRNAs. m2A2503 modification seems to play a crucial role in the proofreading step occurring at the peptidyl transferase center and thus would serve to optimize ribosomal fidelity. In Solidesulfovibrio magneticus (strain ATCC 700980 / DSM 13731 / RS-1) (Desulfovibrio magneticus), this protein is Dual-specificity RNA methyltransferase RlmN.